A 441-amino-acid polypeptide reads, in one-letter code: Damage-control phosphatase ARMT1 (441 aa).

Position 2 is an N-acetylalanine (alanine 2). Position 40 is an N6-acetyllysine (lysine 40). Phosphoserine is present on serine 102. Positions 253 and 254 each coordinate Mn(2+). Residue 253-254 coordinates substrate; sequence DN. Residues glutamate 258 and aspartate 291 each coordinate S-adenosyl-L-methionine. Mn(2+) is bound at residue aspartate 291. Substrate contacts are provided by residues 367–371 and lysine 404; that span reads DLNYR. Positions 401–404 match the Subfamily III RTxK motif motif; it reads RTLK.

Belongs to the damage-control phosphatase family. Sugar phosphate phosphatase III subfamily. It depends on Mn(2+) as a cofactor. Ni(2+) is required as a cofactor. Post-translationally, automethylated.

It catalyses the reaction beta-D-fructose 1-phosphate + H2O = D-fructose + phosphate. The catalysed reaction is beta-D-fructose 6-phosphate = dihydroxyacetone + D-glyceraldehyde 3-phosphate. The enzyme catalyses L-glutamyl-[protein] + S-adenosyl-L-methionine = [protein]-L-glutamate 5-O-methyl ester + S-adenosyl-L-homocysteine. In terms of biological role, metal-dependent phosphatase that shows phosphatase activity against several substrates, including fructose-1-phosphate and fructose-6-phosphate. Its preference for fructose-1-phosphate, a strong glycating agent that causes DNA damage rather than a canonical yeast metabolite, suggests a damage-control function in hexose phosphate metabolism. Has also been shown to have O-methyltransferase activity that methylates glutamate residues of target proteins to form gamma-glutamyl methyl ester residues. Possibly methylates PCNA, suggesting it is involved in the DNA damage response. In Macaca fascicularis (Crab-eating macaque), this protein is Damage-control phosphatase ARMT1.